The sequence spans 270 residues: MLTDKKSSPTWSSLLPSETSQYFVFGNWKMNKTFSEAQTFLKDFVSCEILSNPKIITGIIPPFTLLSSCQQIIKNTPIRLGAQTLHEVDSGAFTGEISAPMLKDIGVDFVLIGHSERRHIFHEQNHSLAEKLLAAIRNGIVPVLCIGETLEEQEAGATQDILLEQLTVGLSRLPEHAPFILAYEPVWAIGTGKVANPDLVQEIHAFCRNVVKDLISKDAAERTPILYGGSVKADNTRALTLCPDVNGLLVGGASLSVESFLAIIQQIAVS.

27–29 contributes to the substrate binding site; the sequence is NWK. His-114 acts as the Electrophile in catalysis. Glu-184 functions as the Proton acceptor in the catalytic mechanism. Substrate-binding positions include Gly-190, Ser-230, and 251–252; that span reads GG.

It belongs to the triosephosphate isomerase family. Homodimer.

The protein localises to the cytoplasm. The enzyme catalyses D-glyceraldehyde 3-phosphate = dihydroxyacetone phosphate. The protein operates within carbohydrate biosynthesis; gluconeogenesis. Its pathway is carbohydrate degradation; glycolysis; D-glyceraldehyde 3-phosphate from glycerone phosphate: step 1/1. In terms of biological role, involved in the gluconeogenesis. Catalyzes stereospecifically the conversion of dihydroxyacetone phosphate (DHAP) to D-glyceraldehyde-3-phosphate (G3P). The polypeptide is Triosephosphate isomerase (Chlamydia muridarum (strain MoPn / Nigg)).